The sequence spans 160 residues: Small ribosomal subunit protein uS7 (160 aa).

This sequence belongs to the universal ribosomal protein uS7 family. As to quaternary structure, part of the 30S ribosomal subunit. Contacts proteins S9 and S11.

In terms of biological role, one of the primary rRNA binding proteins, it binds directly to 16S rRNA where it nucleates assembly of the head domain of the 30S subunit. Is located at the subunit interface close to the decoding center, probably blocks exit of the E-site tRNA. The sequence is that of Small ribosomal subunit protein uS7 from Anaplasma phagocytophilum (strain HZ).